The following is a 95-amino-acid chain: Integration host factor subunit beta (95 aa).

Belongs to the bacterial histone-like protein family. As to quaternary structure, heterodimer of an alpha and a beta chain.

Its function is as follows. This protein is one of the two subunits of integration host factor, a specific DNA-binding protein that functions in genetic recombination as well as in transcriptional and translational control. This is Integration host factor subunit beta from Ruegeria sp. (strain TM1040) (Silicibacter sp.).